Consider the following 278-residue polypeptide: Orotidine 5'-phosphate decarboxylase (278 aa).

Lys95 serves as the catalytic Proton donor.

This sequence belongs to the OMP decarboxylase family. Type 2 subfamily.

The enzyme catalyses orotidine 5'-phosphate + H(+) = UMP + CO2. The protein operates within pyrimidine metabolism; UMP biosynthesis via de novo pathway; UMP from orotate: step 2/2. The chain is Orotidine 5'-phosphate decarboxylase from Mycobacterium ulcerans (strain Agy99).